The primary structure comprises 132 residues: Ribonuclease P protein component 4 (132 aa).

4 residues coordinate Zn(2+): cysteine 67, cysteine 70, cysteine 96, and cysteine 99.

The protein belongs to the eukaryotic/archaeal RNase P protein component 4 family. As to quaternary structure, consists of a catalytic RNA component and at least 4-5 protein subunits. The cofactor is Zn(2+).

The protein localises to the cytoplasm. It carries out the reaction Endonucleolytic cleavage of RNA, removing 5'-extranucleotides from tRNA precursor.. Part of ribonuclease P, a protein complex that generates mature tRNA molecules by cleaving their 5'-ends. In Thermococcus kodakarensis (strain ATCC BAA-918 / JCM 12380 / KOD1) (Pyrococcus kodakaraensis (strain KOD1)), this protein is Ribonuclease P protein component 4.